The chain runs to 496 residues: DNA-directed DNA/RNA polymerase mu (496 aa).

Positions Met-1–Pro-22 are disordered. Residue Ser-12 is modified to Phosphoserine. The span at Ser-12–Pro-22 shows a compositional bias: low complexity. Positions Pro-23 to His-122 constitute a BRCT domain. Na(+) contacts are provided by Thr-241 and Val-243. The tract at residues Arg-323–Asp-332 is involved in ssDNA binding. Mg(2+) contacts are provided by Asp-330, Asp-332, and Asp-420.

Belongs to the DNA polymerase type-X family. Requires Mg(2+) as cofactor.

It localises to the nucleus. It carries out the reaction DNA(n) + a 2'-deoxyribonucleoside 5'-triphosphate = DNA(n+1) + diphosphate. Gap-filling polymerase involved in repair of DNA double-strand breaks by non-homologous end joining (NHEJ). Participates in immunoglobulin (Ig) light chain gene rearrangement in V(D)J recombination. This is DNA-directed DNA/RNA polymerase mu (Polm) from Mus musculus (Mouse).